The primary structure comprises 156 residues: Small ribosomal subunit protein uS7 (156 aa).

Belongs to the universal ribosomal protein uS7 family. As to quaternary structure, part of the 30S ribosomal subunit. Contacts proteins S9 and S11.

One of the primary rRNA binding proteins, it binds directly to 16S rRNA where it nucleates assembly of the head domain of the 30S subunit. Is located at the subunit interface close to the decoding center, probably blocks exit of the E-site tRNA. The polypeptide is Small ribosomal subunit protein uS7 (Bordetella bronchiseptica (strain ATCC BAA-588 / NCTC 13252 / RB50) (Alcaligenes bronchisepticus)).